A 706-amino-acid chain; its full sequence is Fatty acid oxidation complex subunit alpha (706 aa).

An enoyl-CoA hydratase region spans residues 1–188; the sequence is MEKTFNLTRR…KMGLVNDVVP (188 aa). Positions 308–706 are 3-hydroxyacyl-CoA dehydrogenase; that stretch reads RKVKKAVILG…TMAQENAHFF (399 aa).

The protein in the N-terminal section; belongs to the enoyl-CoA hydratase/isomerase family. In the central section; belongs to the 3-hydroxyacyl-CoA dehydrogenase family. As to quaternary structure, heterotetramer of two alpha chains (FadJ) and two beta chains (FadI).

Its subcellular location is the cytoplasm. The catalysed reaction is a (3S)-3-hydroxyacyl-CoA = a (2E)-enoyl-CoA + H2O. It catalyses the reaction a 4-saturated-(3S)-3-hydroxyacyl-CoA = a (3E)-enoyl-CoA + H2O. The enzyme catalyses a (3S)-3-hydroxyacyl-CoA + NAD(+) = a 3-oxoacyl-CoA + NADH + H(+). It carries out the reaction (3S)-3-hydroxybutanoyl-CoA = (3R)-3-hydroxybutanoyl-CoA. The protein operates within lipid metabolism; fatty acid beta-oxidation. Functionally, catalyzes the formation of a hydroxyacyl-CoA by addition of water on enoyl-CoA. Also exhibits 3-hydroxyacyl-CoA epimerase and 3-hydroxyacyl-CoA dehydrogenase activities. This is Fatty acid oxidation complex subunit alpha from Shewanella baltica (strain OS155 / ATCC BAA-1091).